The chain runs to 357 residues: GPI mannosyltransferase 2 (357 aa).

The next 8 membrane-spanning stretches (helical) occupy residues 6–26 (TLIV…LVVP), 86–106 (AIAY…ALML), 128–148 (ILSP…FALL), 167–187 (VLGA…PFLF), 201–221 (GVSV…TQYL), 257–277 (YWTA…YLMY), 286–306 (LVPF…MWHV), and 334–354 (YVVR…GAYL).

It belongs to the PIGV family.

It localises to the endoplasmic reticulum membrane. It participates in glycolipid biosynthesis; glycosylphosphatidylinositol-anchor biosynthesis. Its function is as follows. Mannosyltransferase involved in glycosylphosphatidylinositol-anchor biosynthesis. Transfers the second mannose to the glycosylphosphatidylinositol during GPI precursor assembly. The polypeptide is GPI mannosyltransferase 2 (GPI18) (Yarrowia lipolytica (strain CLIB 122 / E 150) (Yeast)).